The primary structure comprises 288 residues: NAD(P)H-hydrate epimerase (288 aa).

Residues Met-1–Glu-48 constitute a mitochondrion transit peptide. In terms of domain architecture, YjeF N-terminal spans Ala-65–Leu-275. Asn-119–Asp-123 contacts (6S)-NADPHX. A K(+)-binding site is contributed by Asn-120. N6-succinyllysine is present on Lys-144. Asp-185 serves as a coordination point for K(+). (6S)-NADPHX-binding positions include Gly-189 to Asp-195 and Asp-218. Residue Ser-221 participates in K(+) binding.

It belongs to the NnrE/AIBP family. Homodimer. Interacts with APOA1 and APOA2. The cofactor is K(+). Undergoes physiological phosphorylation during sperm capacitation, downstream to PKA activation.

It is found in the mitochondrion. Its subcellular location is the secreted. The enzyme catalyses (6R)-NADHX = (6S)-NADHX. It carries out the reaction (6R)-NADPHX = (6S)-NADPHX. Functionally, catalyzes the epimerization of the S- and R-forms of NAD(P)HX, a damaged form of NAD(P)H that is a result of enzymatic or heat-dependent hydration. This is a prerequisite for the S-specific NAD(P)H-hydrate dehydratase to allow the repair of both epimers of NAD(P)HX. Accelerates cholesterol efflux from endothelial cells to high-density lipoprotein (HDL) and thereby regulates angiogenesis. The chain is NAD(P)H-hydrate epimerase from Canis lupus familiaris (Dog).